The chain runs to 428 residues: Growth/differentiation factor 2 (428 aa).

The first 22 residues, 1-22 (MSPGAFRVALLPLFLLVCVTQQ), serve as a signal peptide directing secretion. Residues 23–318 (KPLQNWEQAS…VGPLLARRKR (296 aa)) constitute a propeptide that is removed on maturation. Residues Asn-70 and Asn-135 are each glycosylated (N-linked (GlcNAc...) asparagine). Cys-155 and Cys-236 are joined by a disulfide. Asn-262 carries N-linked (GlcNAc...) asparagine glycosylation. 3 disulfide bridges follow: Cys-326–Cys-392, Cys-355–Cys-425, and Cys-359–Cys-427. Residues 401-415 (SILYKDDMGVPTLKY) form an interaction with ENG region.

It belongs to the TGF-beta family. Homodimer; disulfide-linked. Detected in extracellular fluid as mature homodimer, and in complex with its propeptide. Interacts with ACVRL1, BMPR2 and ACVR2B with high affinity (in vitro). Identified in a complex with ACVRL1 and ACVR2B. Has ten times lower affinity for ACVR2A (in vitro). Interacts with ENG, forming a heterotetramer with a 2:2 stoichiometry. Can form a heteromeric complex with ENG and ACVRL1. Interacts with type I receptor ACVR1. Post-translationally, a reversible disulfide bond can be formed between the two subunits in the homodimer; this has no effect on GDF2 activity.

The protein resides in the secreted. Its function is as follows. Potent circulating inhibitor of angiogenesis. Signals through the type I activin receptor ACVRL1 but not other Alks. Signaling through SMAD1 in endothelial cells requires TGF-beta coreceptor endoglin/ENG. The protein is Growth/differentiation factor 2 (Gdf2) of Mus musculus (Mouse).